A 529-amino-acid polypeptide reads, in one-letter code: Bifunctional purine biosynthesis protein PurH (529 aa).

The MGS-like domain occupies 1-148 (MQQRRPVRRA…KNHKDVAIVV (148 aa)). Residue lysine 287 is modified to N6-acetyllysine.

It belongs to the PurH family.

It carries out the reaction (6R)-10-formyltetrahydrofolate + 5-amino-1-(5-phospho-beta-D-ribosyl)imidazole-4-carboxamide = 5-formamido-1-(5-phospho-D-ribosyl)imidazole-4-carboxamide + (6S)-5,6,7,8-tetrahydrofolate. The enzyme catalyses IMP + H2O = 5-formamido-1-(5-phospho-D-ribosyl)imidazole-4-carboxamide. Its pathway is purine metabolism; IMP biosynthesis via de novo pathway; 5-formamido-1-(5-phospho-D-ribosyl)imidazole-4-carboxamide from 5-amino-1-(5-phospho-D-ribosyl)imidazole-4-carboxamide (10-formyl THF route): step 1/1. It functions in the pathway purine metabolism; IMP biosynthesis via de novo pathway; IMP from 5-formamido-1-(5-phospho-D-ribosyl)imidazole-4-carboxamide: step 1/1. The polypeptide is Bifunctional purine biosynthesis protein PurH (Escherichia coli O8 (strain IAI1)).